The following is a 243-amino-acid chain: MTEALYFLDCYMKEFEATVEKVTDDKFVVLDRTVFYPESGGQPSDTGKLVRESDGAEFNVLYVRKFNGDISHEIDGENVSNGLKAGDKVKGFIDWDRRYRHMRMHTATHVIANVIEKEAGAQITGNQLGLDQSRVDFSLEVFDRDKFAEYEKIANDLIAQKSPVNLYLVSRKEAEEKLSRLTTLAKGFSDEIKEVRIVEIEGVTIEACGGTHVKNTEEIKGVKIIKLQNKGKSNRRMYFTLVD.

Zn(2+) contacts are provided by His-105, His-109, Cys-208, and His-212.

It belongs to the class-II aminoacyl-tRNA synthetase family. Editing domain AlaX-M subfamily. Zn(2+) is required as a cofactor.

It is found in the cytoplasm. Functionally, functions in trans to edit the amino acid moiety from incorrectly charged Ser-tRNA(Ala) or Gly-tRNA(Ala). Has no activity on incorrectly charged Ser-tRNA(Thr), nor on correctly charged Ala-tRNA(Ala) or Ser-tRNA(Ser). This chain is Alanyl-tRNA editing protein AlaX-M (alaXM), found in Methanosarcina barkeri (strain Fusaro / DSM 804).